We begin with the raw amino-acid sequence, 396 residues long: S-adenosylmethionine synthase (396 aa).

ATP is bound at residue histidine 16. Aspartate 18 contacts Mg(2+). Glutamate 44 contributes to the K(+) binding site. L-methionine is bound by residues glutamate 57 and glutamine 100. Positions 100-110 (QSPDIAQGVDR) are flexible loop. ATP is bound by residues 167–169 (DAK), 233–234 (RF), aspartate 242, 248–249 (RK), alanine 265, and lysine 269. Aspartate 242 is an L-methionine binding site. Residue lysine 273 participates in L-methionine binding.

The protein belongs to the AdoMet synthase family. In terms of assembly, homotetramer; dimer of dimers. Mg(2+) is required as a cofactor. The cofactor is K(+).

The protein localises to the cytoplasm. The catalysed reaction is L-methionine + ATP + H2O = S-adenosyl-L-methionine + phosphate + diphosphate. The protein operates within amino-acid biosynthesis; S-adenosyl-L-methionine biosynthesis; S-adenosyl-L-methionine from L-methionine: step 1/1. Its function is as follows. Catalyzes the formation of S-adenosylmethionine (AdoMet) from methionine and ATP. The overall synthetic reaction is composed of two sequential steps, AdoMet formation and the subsequent tripolyphosphate hydrolysis which occurs prior to release of AdoMet from the enzyme. The sequence is that of S-adenosylmethionine synthase from Paraburkholderia xenovorans (strain LB400).